A 337-amino-acid polypeptide reads, in one-letter code: Probable cytosolic iron-sulfur protein assembly protein Ciao1 (337 aa).

WD repeat units follow at residues 12–51, 58–97, 102–141, 147–186, 193–232, 251–290, and 301–337; these read GHRG…RWVA, GHSR…FECN, GHEN…EYEC, THTQ…SDWS, SHES…NEFG, YHSR…SPHE, and AHSQ…EPEE.

It belongs to the WD repeat CIA1 family.

Its function is as follows. Essential component of the cytosolic iron-sulfur (Fe/S) protein assembly machinery. Required for the maturation of extramitochondrial Fe/S proteins. This is Probable cytosolic iron-sulfur protein assembly protein Ciao1 from Aedes aegypti (Yellowfever mosquito).